The following is a 356-amino-acid chain: Glutamine synthetase nodule isozyme (356 aa).

Residues 19 to 99 (IIAEYIWVGG…VICDVYTPAG (81 aa)) form the GS beta-grasp domain. Residues 106-356 (KRHNAAKIFS…IAETTLLWKP (251 aa)) form the GS catalytic domain.

This sequence belongs to the glutamine synthetase family. As to quaternary structure, homooctamer. Found at highest levels in root nodules.

The protein resides in the cytoplasm. It carries out the reaction L-glutamate + NH4(+) + ATP = L-glutamine + ADP + phosphate + H(+). In Medicago sativa (Alfalfa), this protein is Glutamine synthetase nodule isozyme (GS1).